The primary structure comprises 273 residues: Vitamin B12-binding protein (273 aa).

An N-terminal signal peptide occupies residues 1-18 (MMKTLSSLLLLFSVSLQA). The Fe/B12 periplasmic-binding domain maps to 23 to 273 (RVISLAPHAT…EHFASIEQKR (251 aa)). The cysteines at positions 183 and 263 are disulfide-linked.

This sequence belongs to the BtuF family. In terms of assembly, the complex is composed of two ATP-binding proteins (BtuD), two transmembrane proteins (BtuC) and a solute-binding protein (BtuF).

The protein localises to the periplasm. Its function is as follows. Part of the ABC transporter complex BtuCDF involved in vitamin B12 import. Binds vitamin B12 and delivers it to the periplasmic surface of BtuC. In Vibrio vulnificus (strain CMCP6), this protein is Vitamin B12-binding protein.